Consider the following 220-residue polypeptide: Histone deacetylase complex subunit SAP30 (220 aa).

Residues 1 to 129 are interaction with NCOR1; the sequence is MNGFTPEEMS…QSVRNRRKRK (129 aa). Residue Thr-5 is modified to Phosphothreonine. The segment at 67–115 adopts an Atypical zinc-finger fold; the sequence is CCLREDGERCGRAAGNASFSKRIQKSISQKKVKIELDKSARHLYICDYH. Residue Lys-87 forms a Glycyl lysine isopeptide (Lys-Gly) (interchain with G-Cter in SUMO2) linkage. The disordered stretch occupies residues 123–143; it reads RNRRKRKGSDDDGGDSPVQDI. Residues 130–220 are interaction with SIN3A; sequence GSDDDGGDSP…SDLKADSGVH (91 aa). A phosphoserine mark is found at Ser-131 and Ser-138. Thr-145 carries the phosphothreonine modification. Glycyl lysine isopeptide (Lys-Gly) (interchain with G-Cter in SUMO2) cross-links involve residues Lys-194 and Lys-214.

This sequence belongs to the SAP30 family. In terms of assembly, component of the histone deacetylase complex that includes at least SIN3A, HDAC1 and HDAC2. Found in a complex composed of at least SINHCAF, SIN3A, HDAC1, SAP30, RBBP4, OGT and TET1. Interacts with HDAC1. Interacts with SIN3A, SIN3B, HDAC2, RBBP4 and NCOR1. Interacts directly with SAMSN1. Interacts with HCFC1. Interacts with SAP30BP.

The protein resides in the nucleus. In terms of biological role, involved in the functional recruitment of the Sin3-histone deacetylase complex (HDAC) to a specific subset of N-CoR corepressor complexes. Capable of transcription repression by N-CoR. Active in deacetylating core histone octamers (when in a complex) but inactive in deacetylating nucleosomal histones. This chain is Histone deacetylase complex subunit SAP30, found in Mus musculus (Mouse).